Reading from the N-terminus, the 230-residue chain is Demethylmenaquinone methyltransferase (230 aa).

S-adenosyl-L-methionine is bound by residues Thr-57, Asp-77, and 101 to 102; that span reads DI.

Belongs to the class I-like SAM-binding methyltransferase superfamily. MenG/UbiE family.

The enzyme catalyses a 2-demethylmenaquinol + S-adenosyl-L-methionine = a menaquinol + S-adenosyl-L-homocysteine + H(+). Its pathway is quinol/quinone metabolism; menaquinone biosynthesis; menaquinol from 1,4-dihydroxy-2-naphthoate: step 2/2. Its function is as follows. Methyltransferase required for the conversion of demethylmenaquinol (DMKH2) to menaquinol (MKH2). The polypeptide is Demethylmenaquinone methyltransferase (Chlamydia pneumoniae (Chlamydophila pneumoniae)).